A 1161-amino-acid polypeptide reads, in one-letter code: Auxin response factor 19 (1161 aa).

The disordered stretch occupies residues 1-20 (MMKQAQQQPPPPPASSAATT). A DNA-binding region (TF-B3) is located at residues 154-256 (FCKTLTASDT…QLLLGIRRAN (103 aa)). Positions 573–598 (NQMQQQHASSTQGQQPATSQPLLLPQ) are disordered. In terms of domain architecture, PB1 spans 1027-1111 (RTFTKVYKRG…KCIRILSPQE (85 aa)).

It belongs to the ARF family. Homodimers and heterodimers. As to expression, expressed in roots, culms, leaves and young panicles.

The protein resides in the nucleus. Functionally, auxin response factors (ARFs) are transcriptional factors that bind specifically to the DNA sequence 5'-TGTCTC-3' found in the auxin-responsive promoter elements (AuxREs). This chain is Auxin response factor 19 (ARF19), found in Oryza sativa subsp. japonica (Rice).